The primary structure comprises 246 residues: uncharacterized protein (246 aa).

Helical transmembrane passes span 7–27 (KVTL…ALII), 50–70 (LNIL…SMEF), 99–119 (VSFY…LLFF), 135–155 (LALI…GLLC), 163–183 (AVAV…VQLM), and 219–239 (FSIG…WWCF).

The protein resides in the cell membrane. This is an uncharacterized protein from Bacillus subtilis (strain 168).